A 341-amino-acid polypeptide reads, in one-letter code: THO complex subunit 6 (341 aa).

WD repeat units lie at residues 22–61, 74–112, 124–165, 166–205, 215–254, 256–293, and 295–339; these read RLHM…SSEA, AHDG…GCKE, LEVP…RVLR, GHTD…EVQT, SRPH…PTTI, PIRA…KAQV, and GSSP…AFSL. S180 bears the Phosphoserine mark.

The protein belongs to the WD repeat THOC6 family. In terms of assembly, component of the THO subcomplex, which is composed of THOC1, THOC2, THOC3, THOC5, THOC6 and THOC7. The THO subcomplex interacts with DDX39B to form the THO-DDX39B complex which multimerizes into a 28-subunit tetrameric assembly. Component of the transcription/export (TREX) complex at least composed of ALYREF/THOC4, DDX39B, SARNP/CIP29, CHTOP and the THO subcomplex; in the complex interacts with THOC5; together with THOC5 and THOC7, plays a key structural role in the oligomerization of the THO-DDX39B complex. TREX seems to have a dynamic structure involving ATP-dependent remodeling.

The protein localises to the nucleus. Its subcellular location is the nucleus speckle. Its function is as follows. Component of the THO subcomplex of the TREX complex which is thought to couple mRNA transcription, processing and nuclear export, and which specifically associates with spliced mRNA and not with unspliced pre-mRNA. Plays a key structural role in the oligomerization of the THO-DDX39B complex. TREX is recruited to spliced mRNAs by a transcription-independent mechanism, binds to mRNA upstream of the exon-junction complex (EJC) and is recruited in a splicing- and cap-dependent manner to a region near the 5' end of the mRNA where it functions in mRNA export to the cytoplasm via the TAP/NXF1 pathway. Plays a role in apoptosis negative control involved in brain development. Functionally, (Microbial infection) The TREX complex is essential for the export of Kaposi's sarcoma-associated herpesvirus (KSHV) intronless mRNAs and infectious virus production. The protein is THO complex subunit 6 (THOC6) of Homo sapiens (Human).